The primary structure comprises 246 residues: MAGHSKWANIKHRKAAQDAKRGKIFTKLIREITTSARIGDPDPANNPRLRAAVTAALTSNMTRETINRAIARGAGGGDGEQLETIVYEGYGPAGSAVMVECLTDNRNRTVAEVRHAFSKSGGNLGTDGSVAYLFSKKGLLTFVGVDEDALMDAALEAGADDVVTEEDGSIEVYTTPNDFGTVLDALEAAGFKAQNAEVTMIPSTEAELDAETAPKLMRLIDMLEDLDDVQEVYHNGSISDEVAATL.

Belongs to the TACO1 family.

It is found in the cytoplasm. The sequence is that of Probable transcriptional regulatory protein ASA_2843 from Aeromonas salmonicida (strain A449).